The sequence spans 118 residues: Large ribosomal subunit protein bL20 (118 aa).

It belongs to the bacterial ribosomal protein bL20 family.

Its function is as follows. Binds directly to 23S ribosomal RNA and is necessary for the in vitro assembly process of the 50S ribosomal subunit. It is not involved in the protein synthesizing functions of that subunit. The protein is Large ribosomal subunit protein bL20 of Cyanothece sp. (strain PCC 7425 / ATCC 29141).